The primary structure comprises 628 residues: ATP-dependent zinc metalloprotease FtsH 4 (628 aa).

At 1–14 (MAIKPQPQWQRRLA) the chain is on the cytoplasmic side. A helical membrane pass occupies residues 15–35 (SVLLWGSTIYLLVNLLAPALF). The Lumenal segment spans residues 36–119 (RSQPPQVPYS…AAAPPAKNSW (84 aa)). The helical transmembrane segment at 120 to 140 (FGTLLSWVIPPLIFVGIWSFF) threads the bilayer. The Cytoplasmic portion of the chain corresponds to 141-628 (LNRNNNGAPG…QVQAPGTLVV (488 aa)). 214 to 221 (GPPGTGKT) lines the ATP pocket. H438 is a binding site for Zn(2+). E439 is a catalytic residue. Zn(2+)-binding residues include H442 and D515.

It in the central section; belongs to the AAA ATPase family. The protein in the C-terminal section; belongs to the peptidase M41 family. In terms of assembly, homohexamer. Requires Zn(2+) as cofactor.

Its subcellular location is the cellular thylakoid membrane. Its function is as follows. Acts as a processive, ATP-dependent zinc metallopeptidase for both cytoplasmic and membrane proteins. Plays a role in the quality control of integral membrane proteins. This chain is ATP-dependent zinc metalloprotease FtsH 4, found in Synechocystis sp. (strain ATCC 27184 / PCC 6803 / Kazusa).